Here is a 425-residue protein sequence, read N- to C-terminus: MLDVKMIRQNPDFVKEQLGHRGVAASDIDDLLAADEKRRELIAKSEQLKSTRNQVSGEISQKKRNKEDASAEIAEMQKVSADVKTLDEERRTVDAQVQDMAAHLPNMPHPDVPVSLKEEDAVELRRIGTPRHFDFTPKAHWDIGEDLGILDFERGAKVSGSRFLYYVGDGAKLERAVYNFFLDQHEAEGYTEVLPPYMVTDESMYGTGQFPKFKEDAFRITTQDLTLIPTAEVPLVNYYRDEVIPAEKLPVYFTALSPAFREEAGSAGRDTKGLIRLHQFNKVEMVKFTKPEDSWDELEKLTNNAESLLKKLGLPYHVITLTTGDMSFTAAMTHDLEVWFPEQDKYREISSCSNCTDFQARRAHIQYRDDDGKLQFVHTLNGSGLAVGRTVAAILENYQNEDGTVTIPDVLVPYMHGKTKIEKQG.

Residue 230–232 (TAE) participates in L-serine binding. ATP is bound at residue 261-263 (REE). Glutamate 284 serves as a coordination point for L-serine. Residue 348–351 (EISS) participates in ATP binding. Serine 383 is a binding site for L-serine.

This sequence belongs to the class-II aminoacyl-tRNA synthetase family. Type-1 seryl-tRNA synthetase subfamily. In terms of assembly, homodimer. The tRNA molecule binds across the dimer.

The protein localises to the cytoplasm. It carries out the reaction tRNA(Ser) + L-serine + ATP = L-seryl-tRNA(Ser) + AMP + diphosphate + H(+). The enzyme catalyses tRNA(Sec) + L-serine + ATP = L-seryl-tRNA(Sec) + AMP + diphosphate + H(+). The protein operates within aminoacyl-tRNA biosynthesis; selenocysteinyl-tRNA(Sec) biosynthesis; L-seryl-tRNA(Sec) from L-serine and tRNA(Sec): step 1/1. Functionally, catalyzes the attachment of serine to tRNA(Ser). Is also able to aminoacylate tRNA(Sec) with serine, to form the misacylated tRNA L-seryl-tRNA(Sec), which will be further converted into selenocysteinyl-tRNA(Sec). In Lactiplantibacillus plantarum (strain ATCC BAA-793 / NCIMB 8826 / WCFS1) (Lactobacillus plantarum), this protein is Serine--tRNA ligase 2.